Consider the following 254-residue polypeptide: Mantle protein (254 aa).

The signal sequence occupies residues 1–16 (MLAVLLFAALVATAYS).

As to expression, prismatic layer of shell (at protein level). Expressed primarily in the mantle with highest level in the outer epithelium of the mantle edge and lower level in the mantle pallium.

Its subcellular location is the secreted. This is Mantle protein from Margaritifera margaritifera (Freshwater pearl mussel).